The primary structure comprises 428 residues: MLDIQFIREHTDIVKESQRKRGESVELVDEVLSSDTARREALKAFEEARAQQKEIGKKVASAPADEKAKLIAETKELSQKVSEYKSKADSAAEEYTTAMWKLSNIVEPEAPEGGEDDYVVVKKVGQIRDFAAEGFEPKDHLTLGTGVAGIDMRRGVKVGGSRFYFLRGQVARMQIAMLTMAVDQAEEHGFTLAITPTLVRPEVMRGTGFLNSHADEIYRLREPDDQYLVGTSEVALAGMHENEILDLGNGPLRYCGWSSCYRREAGAAGKDTSGIIRVHQFDKVEMFVYAKQEDSYKEHEHLLAMEQEMLAKVEVPYRIIDTAAGDLGSSAARKFDCEAWVPTQGRYRELTSTSNCTEYQARRLNIRERMEDGGTRPVSTLNGTLATTRWLVAIMENHQQKDGSIEIPQAMRAYMGGKEVIEPTKWEA.

231 to 233 (TSE) is an L-serine binding site. Residues 262–264 (RRE) and Val278 each bind ATP. L-serine is bound at residue Glu285. 349-352 (ELTS) lines the ATP pocket. Thr384 contacts L-serine.

The protein belongs to the class-II aminoacyl-tRNA synthetase family. Type-1 seryl-tRNA synthetase subfamily. In terms of assembly, homodimer. The tRNA molecule binds across the dimer.

It is found in the cytoplasm. It catalyses the reaction tRNA(Ser) + L-serine + ATP = L-seryl-tRNA(Ser) + AMP + diphosphate + H(+). The catalysed reaction is tRNA(Sec) + L-serine + ATP = L-seryl-tRNA(Sec) + AMP + diphosphate + H(+). It functions in the pathway aminoacyl-tRNA biosynthesis; selenocysteinyl-tRNA(Sec) biosynthesis; L-seryl-tRNA(Sec) from L-serine and tRNA(Sec): step 1/1. In terms of biological role, catalyzes the attachment of serine to tRNA(Ser). Is also able to aminoacylate tRNA(Sec) with serine, to form the misacylated tRNA L-seryl-tRNA(Sec), which will be further converted into selenocysteinyl-tRNA(Sec). The chain is Serine--tRNA ligase from Bifidobacterium longum (strain DJO10A).